Consider the following 496-residue polypeptide: MSKKEEKTKVRLPRGFVDRTSAQLHALETMIAQIHEVYESYGFEALETPIFEYTDVLGKFLPDSDRPNAGVFSLQDEDEQWMSLRYDLTAPLARYFAENFEILPKPYRSYRSGFVFRNEKPGPGRFRQFMQLDADIVGSSTVAADAEICMMAADSLERLGIQRHDYVIRLSNRKILDGVLELIGLQGDEQAEKRLTILRAIDKFDKFGMEGVRLLLGKGRLDESGDFTKGAGLSQQESEPILSLISVGAETAEATLDNLKNIVGHTIRGLEGIHELEEMQTIFSKNGYQDRIKIDPSVVRGLDYYTGPVFEAELLFDVLNEEGQKVVFGSVGGGGRYDGLVARFRDEAVPATGFSVGVSRLMAALHNLGKCPVKKTVGPVVVLMMDKDPEYVAYYQKMVMQLRHAGIRSELYLGAAGIKAQMKYADRRHAPCVVIQGASERQEGKVQIKDLIEGARLSAEIKDNQTWRESRPAQIMVDENQLVQAVQEILVAHQFL.

The protein belongs to the class-II aminoacyl-tRNA synthetase family. Homodimer.

It localises to the cytoplasm. It carries out the reaction tRNA(His) + L-histidine + ATP = L-histidyl-tRNA(His) + AMP + diphosphate + H(+). The sequence is that of Histidine--tRNA ligase from Bartonella bacilliformis (strain ATCC 35685 / KC583 / Herrer 020/F12,63).